The sequence spans 270 residues: Phthiotriol/phenolphthiotriol dimycocerosates methyltransferase (270 aa).

It belongs to the methyltransferase superfamily. Phthiotriol/phenolphthiotriol dimycocerosates methyltransferase family.

Its function is as follows. Catalyzes the methylation of the lipid moiety of the intermediate compounds phthiotriol and glycosylated phenolphthiotriol dimycoserosates to form phthiocerol dimycocerosates (DIM A) and glycosylated phenolphthiocerol dimycocerosates (PGL). This is Phthiotriol/phenolphthiotriol dimycocerosates methyltransferase from Mycobacterium leprae (strain TN).